We begin with the raw amino-acid sequence, 2179 residues long: Genome polyprotein (2179 aa).

Positions 763–765 match the Cell attachment site motif; sequence RGD. Residues 786–881 form the LRAT domain; that stretch reads LAYLDRGFYK…IFGSHSLSQH (96 aa). The active-site For protein 2A H-NC is the His796. Cys865 (for protein 2A H-NC; Acyl-thioester intermediate) is an active-site residue. The 162-residue stretch at 1156–1317 folds into the SF3 helicase domain; the sequence is FQELARIPNR…KHYSKSGKLN (162 aa). 1184–1191 contacts ATP; sequence GEPGQGKS. Tyr1493 is modified (O-(5'-phospho-RNA)-tyrosine). Positions 1517–1707 constitute a Peptidase C3 domain; the sequence is APYDGQLEHI…IPFNFLKNDM (191 aa). Catalysis depends on for protease 3C activity residues His1557, Asp1595, and Cys1669. The Acyl-thioester intermediate role is filled by Cys1896. The region spanning 1944-2058 is the RdRp catalytic domain; it reads DYNYEMDYSQ…SLDKEIEPER (115 aa). Asp1950 and Asp2044 together coordinate Mg(2+).

This sequence belongs to the picornaviruses polyprotein family. Interacts with capsid protein VP1 and capsid protein VP3 to form heterotrimeric protomers. Five protomers subsequently associate to form pentamers which serve as building blocks for the capsid. As to quaternary structure, interacts with capsid protein VP0, and capsid protein VP3 to form heterotrimeric protomers. Five protomers subsequently associate to form pentamers which serve as building blocks for the capsid. In terms of assembly, interacts with capsid protein VP0 and capsid protein VP1 to form heterotrimeric protomers. Five protomers subsequently associate to form pentamers which serve as building blocks for the capsid. Homohexamer; forms a hexameric ring structure with 6-fold symmetry characteristic of AAA+ ATPases. As to quaternary structure, homodimer. Interacts with host ACBD3. In terms of assembly, interacts with RNA-directed RNA polymerase. Interacts with Viral protein genome-linked. Mg(2+) serves as cofactor. Post-translationally, VPg is uridylylated by the polymerase and is covalently linked to the 5'-end of genomic RNA. This uridylylated form acts as a nucleotide-peptide primer for the polymerase. In terms of processing, specific enzymatic cleavages yield mature proteins. All cleavages are catalyzed by P3C.

The protein localises to the virion. Its subcellular location is the host cytoplasm. It localises to the host nucleus. The protein resides in the host nucleolus. It is found in the host cytoplasmic vesicle membrane. It carries out the reaction RNA(n) + a ribonucleoside 5'-triphosphate = RNA(n+1) + diphosphate. The enzyme catalyses a ribonucleoside 5'-triphosphate + H2O = a ribonucleoside 5'-diphosphate + phosphate + H(+). The catalysed reaction is Selective cleavage of Gln-|-Gly bond in the poliovirus polyprotein. In other picornavirus reactions Glu may be substituted for Gln, and Ser or Thr for Gly.. Its function is as follows. Forms an icosahedral capsid of pseudo T=3 symmetry together with capsid proteins VP1 and VP3. The capsid is 300 Angstroms in diameter, composed of 60 copies of each capsid protein and enclosing the viral positive strand RNA genome. Capsid proteins interact with host alpha-V/beta-3 integrin heterodimer to provide virion attachment target cell. This attachment induces virion internalization predominantly through clathrin-mediated endocytosis. Binds packaging signals present in the viral RNA. Functionally, forms an icosahedral capsid of pseudo T=3 symmetry together with capsid proteins VP0 and VP1. The capsid is 300 Angstroms in diameter, composed of 60 copies of each capsid protein and enclosing the viral positive strand RNA genome. Capsid proteins interact with host alpha-V/beta-3 integrin heterodimer to provide virion attachment target cell. This attachment induces virion internalization predominantly through clathrin-mediated endocytosis. Binds packaging signals present in the viral RNA. In terms of biological role, forms an icosahedral capsid of pseudo T=3 symmetry together with capsid proteins VP0 and VP3. The capsid is 300 Angstroms in diameter, composed of 60 copies of each capsid protein and enclosing the viral positive strand RNA genome. Capsid proteins interact with host alpha-V/beta-3 integrin heterodimer to provide virion attachment target cell. This attachment induces virion internalization predominantly through clathrin-mediated endocytosis. Binds packaging signals present in the viral RNA. Is not a protease. Its function is as follows. Plays an essential role in the virus replication cycle by acting as a viroporin. Creates a pore in the host endoplasmic reticulum and as a consequence releases Ca2+ in the cytoplasm of infected cell. In turn, high levels of cytoplasmic calcium may trigger membrane trafficking and transport of viral ER-associated proteins to viroplasms, sites of viral genome replication. Functionally, induces and associates with structural rearrangements of intracellular membranes. Displays RNA-binding, nucleotide binding and NTPase activities. May play a role in virion morphogenesis and viral RNA encapsidation by interacting with the capsid protein VP3. In terms of biological role, localizes the viral replication complex to the surface of membranous vesicles. It inhibits host cell endoplasmic reticulum-to-Golgi apparatus transport and causes the disassembly of the Golgi complex, possibly through GBF1 interaction. This would result in depletion of MHC, trail receptors and IFN receptors at the host cell surface. Plays an essential role in viral RNA replication by recruiting ACBD3 and PI4KB at the viral replication sites, thereby allowing the formation of the rearranged membranous structures where viral replication takes place. Acts as a primer for viral RNA replication and remains covalently bound to viral genomic RNA. VPg is uridylylated prior to priming replication into VPg-pUpU. The VPg-pUpU is then used as primer on the genomic RNA poly(A) by the RNA-dependent RNA polymerase to replicate the viral genome. Following genome release from the infecting virion in the cytoplasm, the VPg-RNA linkage is probably removed by host TDP2. During the late stage of the replication cycle, host TDP2 is excluded from sites of viral RNA synthesis and encapsidation, allowing for the generation of progeny virions. Its function is as follows. Cysteine protease that generates mature viral proteins from the precursor polyprotein. In addition to its proteolytic activity, it binds to viral RNA, and thus influences viral genome replication. RNA and substrate bind cooperatively to the protease. Functionally, replicates the viral genomic RNA on the surface of intracellular membranes. Covalently attaches UMP to a tyrosine of VPg, which is used to prime RNA synthesis. The positive stranded RNA genome is first replicated at virus induced membranous vesicles, creating a dsRNA genomic replication form. This dsRNA is then used as template to synthesize positive stranded RNA genomes. ss(+)RNA genomes are either translated, replicated or encapsidated. The polypeptide is Genome polyprotein (Human parechovirus 2 (strain Williamson) (HPeV-2)).